The primary structure comprises 279 residues: Ribosomal RNA small subunit methyltransferase A (279 aa).

6 residues coordinate S-adenosyl-L-methionine: asparagine 28, leucine 30, glycine 55, glutamate 77, aspartate 103, and asparagine 122.

It belongs to the class I-like SAM-binding methyltransferase superfamily. rRNA adenine N(6)-methyltransferase family. RsmA subfamily.

It is found in the cytoplasm. It carries out the reaction adenosine(1518)/adenosine(1519) in 16S rRNA + 4 S-adenosyl-L-methionine = N(6)-dimethyladenosine(1518)/N(6)-dimethyladenosine(1519) in 16S rRNA + 4 S-adenosyl-L-homocysteine + 4 H(+). Functionally, specifically dimethylates two adjacent adenosines (A1518 and A1519) in the loop of a conserved hairpin near the 3'-end of 16S rRNA in the 30S particle. May play a critical role in biogenesis of 30S subunits. The sequence is that of Ribosomal RNA small subunit methyltransferase A from Ruegeria pomeroyi (strain ATCC 700808 / DSM 15171 / DSS-3) (Silicibacter pomeroyi).